The sequence spans 118 residues: uncharacterized protein (118 aa).

Residues 98–118 (KGKGNEGREEAEEPLEEPEEG) are disordered. The span at 106–118 (EEAEEPLEEPEEG) shows a compositional bias: acidic residues.

It belongs to the UPF0440 family.

This is an uncharacterized protein from Pyrococcus abyssi (strain GE5 / Orsay).